The sequence spans 301 residues: Homeobox protein Hox-D13 (301 aa).

Disordered regions lie at residues 1-20 (MDGL…TPGQ) and 55-75 (GERS…PGSG). The span at 8–18 (SSGGGGGGGTP) shows a compositional bias: gly residues. Residues 234-293 (GRKKRVPYTKLQLKELENEYAINKFINKDKRRRISAATNLSERQVTIWFQNRRVKDKKIV) constitute a DNA-binding region (homeobox).

This sequence belongs to the Abd-B homeobox family.

The protein localises to the nucleus. Sequence-specific transcription factor that binds gene promoters and activates their transcription. Part of a developmental regulatory system that provides cells with specific positional identities on the anterior-posterior axis. This Gallus gallus (Chicken) protein is Homeobox protein Hox-D13 (HOXD13).